The primary structure comprises 204 residues: ATP-dependent Clp protease proteolytic subunit 1 (204 aa).

The active-site Nucleophile is the S97. Residue H122 is part of the active site.

The protein belongs to the peptidase S14 family. Fourteen ClpP subunits assemble into 2 heptameric rings which stack back to back to give a disk-like structure with a central cavity, resembling the structure of eukaryotic proteasomes.

The protein localises to the cytoplasm. The catalysed reaction is Hydrolysis of proteins to small peptides in the presence of ATP and magnesium. alpha-casein is the usual test substrate. In the absence of ATP, only oligopeptides shorter than five residues are hydrolyzed (such as succinyl-Leu-Tyr-|-NHMec, and Leu-Tyr-Leu-|-Tyr-Trp, in which cleavage of the -Tyr-|-Leu- and -Tyr-|-Trp bonds also occurs).. Its function is as follows. Cleaves peptides in various proteins in a process that requires ATP hydrolysis. Has a chymotrypsin-like activity. Plays a major role in the degradation of misfolded proteins. In Trichormus variabilis (strain ATCC 29413 / PCC 7937) (Anabaena variabilis), this protein is ATP-dependent Clp protease proteolytic subunit 1.